Reading from the N-terminus, the 523-residue chain is ATP synthase subunit alpha (523 aa).

Position 179–186 (179–186 (GDRQTGKT)) interacts with ATP.

This sequence belongs to the ATPase alpha/beta chains family. As to quaternary structure, F-type ATPases have 2 components, CF(1) - the catalytic core - and CF(0) - the membrane proton channel. CF(1) has five subunits: alpha(3), beta(3), gamma(1), delta(1), epsilon(1). CF(0) has three main subunits: a(1), b(2) and c(9-12). The alpha and beta chains form an alternating ring which encloses part of the gamma chain. CF(1) is attached to CF(0) by a central stalk formed by the gamma and epsilon chains, while a peripheral stalk is formed by the delta and b chains.

It localises to the cell inner membrane. The enzyme catalyses ATP + H2O + 4 H(+)(in) = ADP + phosphate + 5 H(+)(out). Its function is as follows. Produces ATP from ADP in the presence of a proton gradient across the membrane. The alpha chain is a regulatory subunit. The polypeptide is ATP synthase subunit alpha (Vibrio parahaemolyticus serotype O3:K6 (strain RIMD 2210633)).